Consider the following 363-residue polypeptide: NAD(P)H-quinone oxidoreductase subunit 1, chloroplastic (363 aa).

The next 6 membrane-spanning stretches (helical) occupy residues 26–46, 98–118, 127–147, 253–273, 300–320, and 336–356; these read IIWV…GVLV, FSIG…VIPF, LSIG…GLLM, FGLF…FVTV, VFGT…FLFI, and LLNL…LLTT.

It belongs to the complex I subunit 1 family. As to quaternary structure, NDH is composed of at least 16 different subunits, 5 of which are encoded in the nucleus.

The protein localises to the plastid. It localises to the chloroplast thylakoid membrane. The catalysed reaction is a plastoquinone + NADH + (n+1) H(+)(in) = a plastoquinol + NAD(+) + n H(+)(out). It carries out the reaction a plastoquinone + NADPH + (n+1) H(+)(in) = a plastoquinol + NADP(+) + n H(+)(out). Its function is as follows. NDH shuttles electrons from NAD(P)H:plastoquinone, via FMN and iron-sulfur (Fe-S) centers, to quinones in the photosynthetic chain and possibly in a chloroplast respiratory chain. The immediate electron acceptor for the enzyme in this species is believed to be plastoquinone. Couples the redox reaction to proton translocation, and thus conserves the redox energy in a proton gradient. This is NAD(P)H-quinone oxidoreductase subunit 1, chloroplastic from Helianthus annuus (Common sunflower).